A 180-amino-acid chain; its full sequence is ATP-dependent protease subunit HslV (180 aa).

Residue threonine 10 is part of the active site. Na(+) is bound by residues glycine 165, cysteine 168, and threonine 171.

It belongs to the peptidase T1B family. HslV subfamily. In terms of assembly, a double ring-shaped homohexamer of HslV is capped on each side by a ring-shaped HslU homohexamer. The assembly of the HslU/HslV complex is dependent on binding of ATP.

Its subcellular location is the cytoplasm. The enzyme catalyses ATP-dependent cleavage of peptide bonds with broad specificity.. Its activity is regulated as follows. Allosterically activated by HslU binding. Protease subunit of a proteasome-like degradation complex believed to be a general protein degrading machinery. This is ATP-dependent protease subunit HslV from Koribacter versatilis (strain Ellin345).